We begin with the raw amino-acid sequence, 23 residues long: Paralytic peptide 2 (23 aa).

An intrachain disulfide couples cysteine 7 to cysteine 19.

It belongs to the GBP/PSP1/paralytic peptide family. In terms of tissue distribution, hemolymph.

In terms of biological role, causes rapid, rigid paralysis when injected into Lepidopteran larvae. The physiological role may be to reduce hemolymph loss following injury and promote wound healing. The sequence is that of Paralytic peptide 2 from Spodoptera exigua (Beet armyworm).